Reading from the N-terminus, the 112-residue chain is FK506-binding protein 1 (112 aa).

The span at M1–E10 shows a compositional bias: polar residues. The segment at M1–F20 is disordered. Residues G24–N112 enclose the PPIase FKBP-type domain.

Belongs to the FKBP-type PPIase family. FKBP1 subfamily.

Its subcellular location is the cytoplasm. The catalysed reaction is [protein]-peptidylproline (omega=180) = [protein]-peptidylproline (omega=0). With respect to regulation, inhibited by both FK506 and rapamycin. In terms of biological role, PPIases accelerate the folding of proteins. It catalyzes the cis-trans isomerization of proline imidic peptide bonds in oligopeptides. The chain is FK506-binding protein 1 (FPR1) from Debaryomyces hansenii (strain ATCC 36239 / CBS 767 / BCRC 21394 / JCM 1990 / NBRC 0083 / IGC 2968) (Yeast).